The sequence spans 384 residues: S-adenosylmethionine synthase (384 aa).

His-15 serves as a coordination point for ATP. Residue Asp-17 coordinates Mg(2+). Position 43 (Glu-43) interacts with K(+). L-methionine-binding residues include Glu-56 and Gln-99. The segment at 99 to 109 (QSADINQGVDR) is flexible loop. Residues 164-166 (DAK), 230-231 (RF), Asp-239, 245-246 (RK), Ala-262, and Lys-266 each bind ATP. Residue Asp-239 participates in L-methionine binding. L-methionine is bound at residue Lys-270.

Belongs to the AdoMet synthase family. In terms of assembly, homotetramer; dimer of dimers. The cofactor is Mg(2+). It depends on K(+) as a cofactor.

It is found in the cytoplasm. The enzyme catalyses L-methionine + ATP + H2O = S-adenosyl-L-methionine + phosphate + diphosphate. It functions in the pathway amino-acid biosynthesis; S-adenosyl-L-methionine biosynthesis; S-adenosyl-L-methionine from L-methionine: step 1/1. Functionally, catalyzes the formation of S-adenosylmethionine (AdoMet) from methionine and ATP. The overall synthetic reaction is composed of two sequential steps, AdoMet formation and the subsequent tripolyphosphate hydrolysis which occurs prior to release of AdoMet from the enzyme. The chain is S-adenosylmethionine synthase from Haemophilus influenzae (strain PittEE).